The sequence spans 741 residues: Translation initiation factor IF-2 (741 aa).

Basic and acidic residues-rich tracts occupy residues 48–74 (HQYR…DKPK) and 107–123 (KGKE…EKKA). The segment at 48–158 (HQYRPKAEKK…PQPAKKEKEL (111 aa)) is disordered. Positions 127 to 139 (AKKKGKGPAKGKK) are enriched in basic residues. Residues 140–151 (QAAPAAKQVPQP) show a composition bias toward low complexity. Residues 242 to 411 (ERPPVVTIMG…LLVSEMEELK (170 aa)) form the tr-type G domain. The G1 stretch occupies residues 251 to 258 (GHVDHGKT). 251–258 (GHVDHGKT) contacts GTP. Residues 276-280 (GITQH) form a G2 region. Residues 297 to 300 (DTPG) are G3. Residues 297-301 (DTPGH) and 351-354 (NKMD) each bind GTP. The G4 stretch occupies residues 351 to 354 (NKMD). The tract at residues 387 to 389 (SAK) is G5.

It belongs to the TRAFAC class translation factor GTPase superfamily. Classic translation factor GTPase family. IF-2 subfamily.

The protein localises to the cytoplasm. In terms of biological role, one of the essential components for the initiation of protein synthesis. Protects formylmethionyl-tRNA from spontaneous hydrolysis and promotes its binding to the 30S ribosomal subunits. Also involved in the hydrolysis of GTP during the formation of the 70S ribosomal complex. The sequence is that of Translation initiation factor IF-2 (infB) from Geobacillus stearothermophilus (Bacillus stearothermophilus).